The chain runs to 683 residues: Phosphomethylpyrimidine synthase (683 aa).

Residues Asn-235, Met-264, Tyr-293, His-329, 349-351 (SRG), 390-393 (DGMR), and Glu-429 each bind substrate. Residue His-433 participates in Zn(2+) binding. Tyr-456 is a binding site for substrate. His-497 contributes to the Zn(2+) binding site. 3 residues coordinate [4Fe-4S] cluster: Cys-577, Cys-580, and Cys-585. The interval 647-683 (RQSPGVESTSLESTSLESTVLESTSLESTALEKAKEV) is disordered. Low complexity predominate over residues 653–675 (ESTSLESTSLESTVLESTSLEST).

The protein belongs to the ThiC family. Homodimer. The cofactor is [4Fe-4S] cluster.

It carries out the reaction 5-amino-1-(5-phospho-beta-D-ribosyl)imidazole + S-adenosyl-L-methionine = 4-amino-2-methyl-5-(phosphooxymethyl)pyrimidine + CO + 5'-deoxyadenosine + formate + L-methionine + 3 H(+). It functions in the pathway cofactor biosynthesis; thiamine diphosphate biosynthesis. Catalyzes the synthesis of the hydroxymethylpyrimidine phosphate (HMP-P) moiety of thiamine from aminoimidazole ribotide (AIR) in a radical S-adenosyl-L-methionine (SAM)-dependent reaction. The sequence is that of Phosphomethylpyrimidine synthase from Shewanella loihica (strain ATCC BAA-1088 / PV-4).